The primary structure comprises 125 residues: Small ribosomal subunit protein bS6m (125 aa).

This sequence belongs to the bacterial ribosomal protein bS6 family. Component of the mitochondrial small ribosomal subunit (mt-SSU). Mature mammalian 55S mitochondrial ribosomes consist of a small (28S) and a large (39S) subunit. The 28S small subunit contains a 12S ribosomal RNA (12S mt-rRNA) and 30 different proteins. The 39S large subunit contains a 16S rRNA (16S mt-rRNA), a copy of mitochondrial valine transfer RNA (mt-tRNA(Val)), which plays an integral structural role, and 52 different proteins.

The protein localises to the mitochondrion. The protein is Small ribosomal subunit protein bS6m (MRPS6) of Homo sapiens (Human).